A 729-amino-acid polypeptide reads, in one-letter code: Fatty acid oxidation complex subunit alpha (729 aa).

The segment at M1–A189 is enoyl-CoA hydratase/isomerase. D296 serves as a coordination point for substrate. A 3-hydroxyacyl-CoA dehydrogenase region spans residues E311–A729. NAD(+) is bound by residues M324, D343, V400–E402, K407, and S429. The For 3-hydroxyacyl-CoA dehydrogenase activity role is filled by H450. N453 is an NAD(+) binding site. Substrate contacts are provided by N500 and Y660.

In the N-terminal section; belongs to the enoyl-CoA hydratase/isomerase family. The protein in the C-terminal section; belongs to the 3-hydroxyacyl-CoA dehydrogenase family. In terms of assembly, heterotetramer of two alpha chains (FadB) and two beta chains (FadA).

The catalysed reaction is a (3S)-3-hydroxyacyl-CoA + NAD(+) = a 3-oxoacyl-CoA + NADH + H(+). The enzyme catalyses a (3S)-3-hydroxyacyl-CoA = a (2E)-enoyl-CoA + H2O. It carries out the reaction a 4-saturated-(3S)-3-hydroxyacyl-CoA = a (3E)-enoyl-CoA + H2O. It catalyses the reaction (3S)-3-hydroxybutanoyl-CoA = (3R)-3-hydroxybutanoyl-CoA. The catalysed reaction is a (3Z)-enoyl-CoA = a 4-saturated (2E)-enoyl-CoA. The enzyme catalyses a (3E)-enoyl-CoA = a 4-saturated (2E)-enoyl-CoA. It functions in the pathway lipid metabolism; fatty acid beta-oxidation. In terms of biological role, involved in the aerobic and anaerobic degradation of long-chain fatty acids via beta-oxidation cycle. Catalyzes the formation of 3-oxoacyl-CoA from enoyl-CoA via L-3-hydroxyacyl-CoA. It can also use D-3-hydroxyacyl-CoA and cis-3-enoyl-CoA as substrate. The sequence is that of Fatty acid oxidation complex subunit alpha from Klebsiella pneumoniae (strain 342).